We begin with the raw amino-acid sequence, 645 residues long: Sodium-dependent phosphate transporter 2 (645 aa).

The Extracellular segment spans residues 1 to 5 (MAMDE). The helical transmembrane segment at 6–26 (YLWMVILGFIIAFILAFSVGA) threads the bilayer. At 27–46 (NDVANSFGTAVGSGVVTLRQ) the chain is on the cytoplasmic side. The helical transmembrane segment at 47–67 (ACILASIFETTGSVLLGAKVG) threads the bilayer. At 68 to 86 (ETIRKGIIDVNLYNNTVET) the chain is on the extracellular side. A glycan (N-linked (GlcNAc...) asparagine) is linked at Asn-81. A helical membrane pass occupies residues 87 to 107 (LMAGEVSAMVGSAVWQLIASF). Residues 108-109 (LR) are Cytoplasmic-facing. Residues 110–130 (FPISGTHCIVGATIGFSLVAI) form a helical membrane-spanning segment. Residues 131–142 (GTQGVQWMELVK) are Extracellular-facing. A helical transmembrane segment spans residues 143-163 (IVASWFISPLLSGFMSGVLFV). The Cytoplasmic portion of the chain corresponds to 164 to 190 (LIRMFILKKEDPVPNGLRALPVFYAAT). The chain crosses the membrane as a helical span at residues 191 to 211 (IAINVFSIMYTGAPVMGLVLP). The Extracellular portion of the chain corresponds to 212–213 (MW). A helical membrane pass occupies residues 214 to 234 (AIALISFGVALLFALFVWLFV). Topologically, residues 235–475 (CPWMRRKITG…EEKEEKDSPE (241 aa)) are cytoplasmic. Phosphoserine is present on residues Ser-253, Ser-256, Ser-259, Ser-268, Ser-316, and Ser-379. Residues 275–320 (PGAKAHDDSTVPLTGSAADPSGTSESMSGGHHPRAPYGRALSMTHG) form a disordered region. Residues 448–471 (RLAPPLAEPEPPRDDPADEEKEEK) form a disordered region. The helical transmembrane segment at 476–496 (VHLLFHFLQVLTACFGSFAHG) threads the bilayer. At 497–523 (GNDVSNAIGPLVALWLIYEQGAVLQEA) the chain is on the extracellular side. A helical transmembrane segment spans residues 524-544 (ATPVWLLFYGGVGICTGLWVW). Residues 545 to 564 (GRRVIQTMGKDLTPITPSSG) lie on the Cytoplasmic side of the membrane. The chain crosses the membrane as a helical span at residues 565-579 (FTIELASAFTVVIAS). The Extracellular segment spans residues 580 to 586 (NIGLPVS). A helical membrane pass occupies residues 587–602 (TTHCKVGSVVAVGWIR). Topologically, residues 603–614 (SRKAVDWRLFRN) are cytoplasmic. The helical transmembrane segment at 615–635 (IFVAWFVTVPVAGLFSAAIMA) threads the bilayer. Over 636–645 (LLIHGILPFV) the chain is Extracellular.

It belongs to the inorganic phosphate transporter (PiT) (TC 2.A.20) family. As to quaternary structure, homodimer.

The protein resides in the cell membrane. It is found in the apical cell membrane. The enzyme catalyses 2 Na(+)(out) + phosphate(out) = 2 Na(+)(in) + phosphate(in). In terms of biological role, sodium-phosphate symporter which preferentially transports the monovalent form of phosphate with a stoichiometry of two sodium ions per phosphate ion. Plays a critical role in the determination of bone quality and strength by providing phosphate for bone mineralization. Required to maintain normal cerebrospinal fluid phosphate levels. Mediates phosphate-induced calcification of vascular smooth muscle cells (VCMCs) and can functionally compensate for loss of SLC20A1 in VCMCs. In Bos taurus (Bovine), this protein is Sodium-dependent phosphate transporter 2 (SLC20A2).